A 32-amino-acid chain; its full sequence is U3-cyrtautoxin-As1a (32 aa).

Cystine bridges form between cysteine 4–cysteine 19, cysteine 11–cysteine 24, and cysteine 18–cysteine 29.

The protein belongs to the neurotoxin 14 (magi-1) family. It to aptotoxin III. In terms of tissue distribution, expressed by the venom gland.

The protein resides in the secreted. Is both paralytic and lethal, when injected into lepidopteran larvae. Is a slower acting toxin, being lethal at 24 hours, but not paralytic at 1 hour post-injection. The polypeptide is U3-cyrtautoxin-As1a (Apomastus schlingeri (Trap-door spider)).